The primary structure comprises 99 residues: MAAAAASRGVGAKLGLREIRIHLCQRSPGSQGVRDFIEKRYVELKKANPDLPILIRECSDVQPKLWARYAFGQETNVPLNNFSADQVTRALENVLSGKA.

Ala-2 carries the N-acetylalanine modification. A disulfide bridge links Cys-24 with Cys-58. At Lys-64 the chain carries N6-acetyllysine; alternate. N6-succinyllysine; alternate is present on Lys-64.

The protein belongs to the complex I NDUFA2 subunit family. As to quaternary structure, complex I is composed of 45 different subunits.

Its subcellular location is the mitochondrion inner membrane. Its function is as follows. Accessory subunit of the mitochondrial membrane respiratory chain NADH dehydrogenase (Complex I), that is believed not to be involved in catalysis. Complex I functions in the transfer of electrons from NADH to the respiratory chain. The immediate electron acceptor for the enzyme is believed to be ubiquinone. In Homo sapiens (Human), this protein is NADH dehydrogenase [ubiquinone] 1 alpha subcomplex subunit 2 (NDUFA2).